Reading from the N-terminus, the 491-residue chain is Conidiogenone synthase PchP450 (491 aa).

A helical membrane pass occupies residues 2–22; the sequence is LLLWFGFFSFVCGLVIYRLQF. Heme is bound at residue Cys430.

It belongs to the cytochrome P450 family. Heme serves as cofactor.

It localises to the membrane. Its pathway is secondary metabolite biosynthesis; terpenoid biosynthesis. Cytochrome P450 monooxygenase; part of the gene cluster that mediates the biosynthesis of conidiogenone, a diterpene known to induce the conidiation. The bifunctional terpene synthase PrDS converts isopentenyl diphosphate (IPP) and dimethylallyl diphosphate (DMAPP) into deoxyconidiogenol. The C-terminal prenyltransferase (PT) domain of PrDS catalyzes formation of GGPP, whereas the N-terminal terpene cyclase (TC) domain catalyzes the cyclization of GGPP into deoxyconidiogenol. The cytochrome P450 monooxygenase PrP450 then catalyzes two rounds of oxidation to furnish conidiogenone. The polypeptide is Conidiogenone synthase PchP450 (Penicillium rubens (strain ATCC 28089 / DSM 1075 / NRRL 1951 / Wisconsin 54-1255) (Penicillium chrysogenum)).